A 619-amino-acid polypeptide reads, in one-letter code: Telomere repeat-binding protein 3 (619 aa).

The Ubiquitin-like domain maps to 324–403 (VKLSIKSFRI…LDNLGFTLEP (80 aa)). Residues 504–563 (AQRRTRRPFSVTEVEALVQAVEELGTGRWRDVKLRAFEDADHRTYVDLKDKWKTLVHTAS) enclose the HTH myb-type domain. Residues 532 to 559 (WRDVKLRAFEDADHRTYVDLKDKWKTLV) constitute a DNA-binding region (H-T-H motif). Residues 593 to 619 (QGKHQARGASKDPDMNRGGAFESGVSV) are disordered.

As to quaternary structure, homodimer and heterodimer with TRP1. Expressed ubiquitously. Highest expression in flowers and roots.

The protein localises to the nucleus. Binds specifically to the plant telomeric double-stranded DNA sequences. At least 2 repeats of telomeric sequences are required for binding. Induces DNA bending. The chain is Telomere repeat-binding protein 3 (TRP3) from Arabidopsis thaliana (Mouse-ear cress).